Here is a 202-residue protein sequence, read N- to C-terminus: UPF0316 protein SH1041 (202 aa).

3 consecutive transmembrane segments (helical) span residues 8 to 28 (PWSM…FLTM), 40 to 60 (MAAA…GMVM), and 66 to 86 (IQNI…GMKI).

It belongs to the UPF0316 family.

It localises to the cell membrane. The sequence is that of UPF0316 protein SH1041 from Staphylococcus haemolyticus (strain JCSC1435).